Reading from the N-terminus, the 330-residue chain is DNA-directed RNA polymerase subunit alpha (330 aa).

The segment at 1–225 (MSDLAIPTIS…KQFASLVSHS (225 aa)) is alpha N-terminal domain (alpha-NTD). The segment at 237–330 (VKYTIPEEKY…KKKNKGIDED (94 aa)) is alpha C-terminal domain (alpha-CTD).

Belongs to the RNA polymerase alpha chain family. In terms of assembly, homodimer. The RNAP catalytic core consists of 2 alpha, 1 beta, 1 beta' and 1 omega subunit. When a sigma factor is associated with the core the holoenzyme is formed, which can initiate transcription.

It catalyses the reaction RNA(n) + a ribonucleoside 5'-triphosphate = RNA(n+1) + diphosphate. DNA-dependent RNA polymerase catalyzes the transcription of DNA into RNA using the four ribonucleoside triphosphates as substrates. The protein is DNA-directed RNA polymerase subunit alpha of Dehalococcoides mccartyi (strain CBDB1).